A 420-amino-acid polypeptide reads, in one-letter code: UDP-N-acetylglucosamine 1-carboxyvinyltransferase (420 aa).

Residue 22–23 participates in phosphoenolpyruvate binding; it reads KN. R93 provides a ligand contact to UDP-N-acetyl-alpha-D-glucosamine. The active-site Proton donor is C117. Position 117 is a 2-(S-cysteinyl)pyruvic acid O-phosphothioketal (C117). UDP-N-acetyl-alpha-D-glucosamine is bound by residues D307 and I329.

It belongs to the EPSP synthase family. MurA subfamily.

It localises to the cytoplasm. It carries out the reaction phosphoenolpyruvate + UDP-N-acetyl-alpha-D-glucosamine = UDP-N-acetyl-3-O-(1-carboxyvinyl)-alpha-D-glucosamine + phosphate. Its pathway is cell wall biogenesis; peptidoglycan biosynthesis. Its function is as follows. Cell wall formation. Adds enolpyruvyl to UDP-N-acetylglucosamine. This chain is UDP-N-acetylglucosamine 1-carboxyvinyltransferase, found in Alteromonas mediterranea (strain DSM 17117 / CIP 110805 / LMG 28347 / Deep ecotype).